An 83-amino-acid chain; its full sequence is Small ribosomal subunit protein bS16 (83 aa).

Belongs to the bacterial ribosomal protein bS16 family.

This is Small ribosomal subunit protein bS16 from Pseudomonas fluorescens (strain Pf0-1).